Reading from the N-terminus, the 78-residue chain is uncharacterized protein (78 aa).

Residues 51 to 78 (GGKWDGGGSGGKWNGGGGSGGGSWKKWN) form a disordered region.

This is an uncharacterized protein from Dictyostelium discoideum (Social amoeba).